Consider the following 619-residue polypeptide: Telomere repeat-binding protein 3 (619 aa).

The Ubiquitin-like domain occupies 324–403 (VKLSIKSFRI…LDNLGFTLEP (80 aa)). The 60-residue stretch at 504–563 (AQRRTRRPFSVTEVEALVQAVEELGTGRWRDVKLRAFEDADHRTYVDLKDKWKTLVHTAS) folds into the HTH myb-type domain. Residues 532–559 (WRDVKLRAFEDADHRTYVDLKDKWKTLV) constitute a DNA-binding region (H-T-H motif). Residues 593-619 (QGKHQARGASKDPDMNRGGAFESGVSV) are disordered.

Homodimer and heterodimer with TRP1. In terms of tissue distribution, expressed ubiquitously. Highest expression in flowers and roots.

It is found in the nucleus. Its function is as follows. Binds specifically to the plant telomeric double-stranded DNA sequences. At least 2 repeats of telomeric sequences are required for binding. Induces DNA bending. The sequence is that of Telomere repeat-binding protein 3 (TRP3) from Arabidopsis thaliana (Mouse-ear cress).